The primary structure comprises 387 residues: Patatin-01 (387 aa).

An N-terminal signal peptide occupies residues 1-23; sequence MATTKSFLILSVMILATTSSTFA. In terms of domain architecture, PNPLA spans 32 to 230; sequence LSIDGGGIKG…TVADPALLSV (199 aa). A GXGXXG motif is present at residues 36–41; it reads GGGIKG. The short motif at 75–79 is the GXSXG element; the sequence is GTSTG. Serine 77 (nucleophile) is an active-site residue. Residue asparagine 115 is glycosylated (N-linked (GlcNAc...) asparagine). Aspartate 216 (proton acceptor) is an active-site residue. The DGA/G motif lies at 216-218; sequence DGA. Residues 361–385 adopt a coiled-coil conformation; it reads ETYEEALKRFAKLLSDRKKLRANKA.

It belongs to the patatin family. As to expression, tuber.

The protein localises to the vacuole. Functionally, probable lipolytic acyl hydrolase (LAH), an activity which is thought to be involved in the response of tubers to pathogens. In Solanum tuberosum (Potato), this protein is Patatin-01.